The following is a 274-amino-acid chain: Large ribosomal subunit protein uL2cz/uL2cy (274 aa).

Disordered stretches follow at residues 1-21 and 225-254; these read MAIHLYKTSTPSTRNGAVDSQ and PVDHPHGGGEGRAPIGRKKPVTPWGYPALG.

This sequence belongs to the universal ribosomal protein uL2 family. Part of the 50S ribosomal subunit.

It is found in the plastid. The protein localises to the chloroplast. The chain is Large ribosomal subunit protein uL2cz/uL2cy (rpl2-A) from Draba nemorosa (Woodland whitlowgrass).